A 451-amino-acid polypeptide reads, in one-letter code: NADP-specific glutamate dehydrogenase (451 aa).

Lysine 113 is a catalytic residue. Serine 252 carries the post-translational modification Phosphoserine.

Belongs to the Glu/Leu/Phe/Val dehydrogenases family. Homohexamer.

The enzyme catalyses L-glutamate + NADP(+) + H2O = 2-oxoglutarate + NH4(+) + NADPH + H(+). This Schizosaccharomyces pombe (strain 972 / ATCC 24843) (Fission yeast) protein is NADP-specific glutamate dehydrogenase (gdh1).